The chain runs to 94 residues: Integration host factor subunit beta (94 aa).

It belongs to the bacterial histone-like protein family. As to quaternary structure, heterodimer of an alpha and a beta chain.

Functionally, this protein is one of the two subunits of integration host factor, a specific DNA-binding protein that functions in genetic recombination as well as in transcriptional and translational control. This Brucella anthropi (strain ATCC 49188 / DSM 6882 / CCUG 24695 / JCM 21032 / LMG 3331 / NBRC 15819 / NCTC 12168 / Alc 37) (Ochrobactrum anthropi) protein is Integration host factor subunit beta.